Here is a 289-residue protein sequence, read N- to C-terminus: Enoyl-CoA hydratase domain-containing protein 3, mitochondrial (289 aa).

Residues 1-14 constitute a mitochondrion transit peptide; sequence MLLRGFSELLKCRG.

This sequence belongs to the enoyl-CoA hydratase/isomerase family.

The protein resides in the mitochondrion. Its function is as follows. May play a role in fatty acid biosynthesis and insulin sensitivity. The polypeptide is Enoyl-CoA hydratase domain-containing protein 3, mitochondrial (echdc3) (Danio rerio (Zebrafish)).